The sequence spans 503 residues: MDMGKGRPRLKLPQMPEAHPQKSCAPDIIGSWSLRNREQLRKRKAEAQGRQTSQWLLGEQKKRKYQRTGKGNKRGRKRQGNVEQKAEPWSQTERERVQEVLVSAEEETEHPGNSATEALPLVPSPTKAVPADQCSEAHQESIQCQERAIQNHSQTHLSPTTCQGIAVLQHSPKMCQDMAEPEVFSPNMCQETAVPQTYPPKALEEMAAAEPLSPKMCQETTVSPNHSSKVPQDMAGPEALSPNMCQEPTVPQEHTLKMCHDVARPEVLSPKTHQEMAVPKAFPCVTPGDAAGLEGCAPKALPQSDVAEGCPLDTTPTSVTPEQTTSDPDLGMAVTEGFFSEARECTVSEGVSTKTHQEAVEPEFISHETYKEFTVPIVSSQKTIQESPEPEQYSPETCQPIPGPENYSLETCHEMSGPEDLSIKTCQDREEPKHSLPEGAQKVGGAQGQDADAQDSENAGAFSQDFTEMEEENKADQDPEAPASPQGSQETCPENGIYSSALF.

2 stretches are compositionally biased toward basic residues: residues 1–10 and 61–79; these read MDMGKGRPRL and KKRK…RKRQ. Residues 1–129 form a disordered region; sequence MDMGKGRPRL…PLVPSPTKAV (129 aa). Positions 7–87 are necessary for nuclear localization; it reads RPRLKLPQMP…RQGNVEQKAE (81 aa). Phosphoserine occurs at positions 90, 103, 124, 153, 158, 171, 213, 223, 228, 241, and 269. Thr-286 is modified (phosphothreonine). A disordered region spans residues 381–503; sequence QKTIQESPEP…ENGIYSSALF (123 aa). Positions 385–396 are enriched in low complexity; sequence QESPEPEQYSPE. A phosphoserine mark is found at Ser-387 and Ser-394. Residues 426–436 show a composition bias toward basic and acidic residues; that stretch reads CQDREEPKHSL.

In terms of tissue distribution, expressed in hematopoietic precursor cells. Highly expressed in bone marrow, the red pulp of the spleen and round spermatids. Weakly expressed in peripheral blood cells.

It is found in the nucleus. Regulates the proliferation and differentiation of hematopoietic cells. Overexpression block the TPA-induced megakaryocytic differentiation in the K562 cell model. May also prevent cell apoptosis through the activation of the nuclear factor-kappa B (NF-kB). The protein is Hemogen (Hemgn) of Mus musculus (Mouse).